The primary structure comprises 87 residues: Small ribosomal subunit protein uS15 (87 aa).

The protein belongs to the universal ribosomal protein uS15 family. Part of the 30S ribosomal subunit. Forms a bridge to the 50S subunit in the 70S ribosome, contacting the 23S rRNA.

Its function is as follows. One of the primary rRNA binding proteins, it binds directly to 16S rRNA where it helps nucleate assembly of the platform of the 30S subunit by binding and bridging several RNA helices of the 16S rRNA. Functionally, forms an intersubunit bridge (bridge B4) with the 23S rRNA of the 50S subunit in the ribosome. This is Small ribosomal subunit protein uS15 from Alkaliphilus metalliredigens (strain QYMF).